The sequence spans 591 residues: Ferric-chelate reductase 1 (591 aa).

A helical membrane pass occupies residues 6–26 (FTVSAFILLLHVSFVANYPSG). The region spanning 13 to 179 (LLLHVSFVAN…FTTPEATIAP (167 aa)) is the Reelin domain. 5 N-linked (GlcNAc...) asparagine glycosylation sites follow: asparagine 50, asparagine 85, asparagine 308, asparagine 321, and asparagine 353. A DOMON domain is found at 216–331 (ERACVLLSFT…ASYYIFVADG (116 aa)). Positions 335–533 (DGRIHKHSQQ…VGTEIILEIH (199 aa)) constitute a Cytochrome b561 domain. Residues 372 to 392 (VHGALMFVAWMTTVSVGVLIA) traverse the membrane as a helical segment. Positions 373 and 413 each coordinate heme b. The next 2 helical transmembrane spans lie at 416–436 (LMLT…IYRG) and 445–465 (HPYL…LAAF). Positions 445 and 481 each coordinate heme b. A run of 3 helical transmembrane segments spans residues 490-510 (IIAV…LPGP), 514-534 (YAMI…EIHA), and 568-588 (VVLA…LSAI).

The protein belongs to the FRRS1 family. Heme b is required as a cofactor.

Its subcellular location is the membrane. Ferric-chelate reductases reduce Fe(3+) to Fe(2+) before its transport from the endosome to the cytoplasm. The protein is Ferric-chelate reductase 1 (FRRS1) of Bos taurus (Bovine).